Here is an 851-residue protein sequence, read N- to C-terminus: Protein FAM13B (851 aa).

Positions 23 to 212 (IPLDELQQGG…GLLENYYEFF (190 aa)) constitute a Rho-GAP domain. Residues 556–565 (IKDAKHKNSD) show a composition bias toward basic and acidic residues. Residues 556 to 611 (IKDAKHKNSDGEFAPQTRPRSNTLPKSFGSSLDHEDGESEGEPRVIQKEKTPSKEA) form a disordered region. Residues 573-585 (RPRSNTLPKSFGS) show a composition bias toward polar residues. The span at 596–611 (GEPRVIQKEKTPSKEA) shows a compositional bias: basic and acidic residues.

It belongs to the FAM13 family.

This chain is Protein FAM13B (Fam13b), found in Mus musculus (Mouse).